A 221-amino-acid chain; its full sequence is PKHD-type hydroxylase P9515_13321 (221 aa).

In terms of domain architecture, Fe2OG dioxygenase spans 80–174; the sequence is TIHGIMFTKS…RLVCVGWIES (95 aa). Histidine 98, aspartate 100, and histidine 155 together coordinate Fe cation. Arginine 165 provides a ligand contact to 2-oxoglutarate.

It depends on Fe(2+) as a cofactor. L-ascorbate serves as cofactor.

This Prochlorococcus marinus (strain MIT 9515) protein is PKHD-type hydroxylase P9515_13321.